Consider the following 676-residue polypeptide: MRVLGGRCGALLACLLLVLPVSEANFLSKQQASQVLVRKRRANSLLEETKQGNLERECIEELCNKEEAREVFENDPETDYFYPKYLVCLRSFQTGLFTAARQSTNAYPDLRSCVNAIPDQCSPLPCNEDGYMSCKDGKASFTCTCKPGWQGEKCEFDINECKDPSNINGGCSQICDNTPGSYHCSCKNGFVMLSNKKDCKDVDECSLKPSICGTAVCKNIPGDFECECPEGYRYNLKSKSCEDIDECSENMCAQLCVNYPGGYTCYCDGKKGFKLAQDQKSCEVVSVCLPLNLDTKYELLYLAEQFAGVVLYLKFRLPEISRFSAEFDFRTYDSEGVILYAESIDHSAWLLIALRGGKIEVQLKNEHTSKITTGGDVINNGLWNMVSVEELEHSISIKIAKEAVMDINKPGPLFKPENGLLETKVYFAGFPRKVESELIKPINPRLDGCIRSWNLMKQGASGIKEIIQEKQNKHCLVTVEKGSYYPGSGIAQFHIDYNNVSSAEGWHVNVTLNIRPSTGTGVMLALVSGNNTVPFAVSLVDSTSEKSQDILLSVENTVIYRIQALSLCSDQQSHLEFRVNRNNLELSTPLKIETISHEDLQRQLAVLDKAMKAKVATYLGGLPDVPFSATPVNAFYNGCMEVNINGVQLDLDEAISKHNDIRAHSCPSVWKKTKNS.

The N-terminal stretch at 1–24 (MRVLGGRCGALLACLLLVLPVSEA) is a signal peptide. Positions 25–41 (NFLSKQQASQVLVRKRR) are excised as a propeptide. The 46-residue stretch at 42–87 (ANSLLEETKQGNLERECIEELCNKEEAREVFENDPETDYFYPKYLV) folds into the Gla domain. A 4-carboxyglutamate mark is found at Glu47, Glu48, Glu55, Glu57, Glu60, Glu61, Glu66, Glu67, Glu70, Glu73, and Glu77. A disulfide bridge links Cys58 with Cys63. Residues 88–116 (CLRSFQTGLFTAARQSTNAYPDLRSCVNA) are thrombin-sensitive. Residues 117-155 (IPDQCSPLPCNEDGYMSCKDGKASFTCTCKPGWQGEKCE) enclose the EGF-like 1 domain. Cystine bridges form between Cys121/Cys134, Cys126/Cys143, Cys145/Cys154, Cys161/Cys175, Cys171/Cys184, Cys186/Cys199, Cys205/Cys217, Cys212/Cys226, Cys228/Cys241, Cys247/Cys256, Cys252/Cys265, Cys267/Cys282, and Cys449/Cys475. Residue Asp136 is modified to (3R)-3-hydroxyaspartate. Residues 157–200 (DINECKDPSNINGGCSQICDNTPGSYHCSCKNGFVMLSNKKDCK) enclose the EGF-like 2; calcium-binding domain. One can recognise an EGF-like 3; calcium-binding domain in the interval 201–242 (DVDECSLKPSICGTAVCKNIPGDFECECPEGYRYNLKSKSCE). Residues 243–283 (DIDECSENMCAQLCVNYPGGYTCYCDGKKGFKLAQDQKSCE) form the EGF-like 4; calcium-binding domain. Laminin G-like domains follow at residues 299–475 (LLYL…NKHC) and 484–666 (YYPG…AHSC). 3 N-linked (GlcNAc...) asparagine glycosylation sites follow: Asn499, Asn509, and Asn530. Cysteines 639 and 666 form a disulfide.

The iron and 2-oxoglutarate dependent 3-hydroxylation of aspartate and asparagine is (R) stereospecific within EGF domains. In terms of tissue distribution, plasma.

The protein resides in the secreted. Its function is as follows. Anticoagulant plasma protein; it is a cofactor to activated protein C in the degradation of coagulation factors Va and VIIIa. It helps to prevent coagulation and stimulating fibrinolysis. This is Vitamin K-dependent protein S (PROS1) from Homo sapiens (Human).